Here is a 144-residue protein sequence, read N- to C-terminus: Large ribosomal subunit protein uL15 (144 aa).

Residues 1–57 (MRLNTLSPAAGSKHAPKRVGRGIGSGLGKTGGRGHKGQKSRSGGKVRPGFEGGQMPL) are disordered. Residues 21-31 (RGIGSGLGKTG) show a composition bias toward gly residues. Over residues 32 to 44 (GRGHKGQKSRSGG) the composition is skewed to basic residues.

Belongs to the universal ribosomal protein uL15 family. In terms of assembly, part of the 50S ribosomal subunit.

In terms of biological role, binds to the 23S rRNA. The polypeptide is Large ribosomal subunit protein uL15 (Vibrio vulnificus (strain CMCP6)).